A 285-amino-acid polypeptide reads, in one-letter code: Acetyl-coenzyme A carboxylase carboxyl transferase subunit beta (285 aa).

One can recognise a CoA carboxyltransferase N-terminal domain in the interval 29-285 (IMTKCPKCKK…ILKIHQEVTK (257 aa)). Zn(2+) contacts are provided by C33, C36, C52, and C55. The C4-type zinc finger occupies 33 to 55 (CPKCKKIMYTKELAENLNVCFNC).

It belongs to the AccD/PCCB family. In terms of assembly, acetyl-CoA carboxylase is a heterohexamer composed of biotin carboxyl carrier protein (AccB), biotin carboxylase (AccC) and two subunits each of ACCase subunit alpha (AccA) and ACCase subunit beta (AccD). It depends on Zn(2+) as a cofactor.

It is found in the cytoplasm. The catalysed reaction is N(6)-carboxybiotinyl-L-lysyl-[protein] + acetyl-CoA = N(6)-biotinyl-L-lysyl-[protein] + malonyl-CoA. Its pathway is lipid metabolism; malonyl-CoA biosynthesis; malonyl-CoA from acetyl-CoA: step 1/1. In terms of biological role, component of the acetyl coenzyme A carboxylase (ACC) complex. Biotin carboxylase (BC) catalyzes the carboxylation of biotin on its carrier protein (BCCP) and then the CO(2) group is transferred by the transcarboxylase to acetyl-CoA to form malonyl-CoA. In Staphylococcus aureus (strain MSSA476), this protein is Acetyl-coenzyme A carboxylase carboxyl transferase subunit beta.